Consider the following 99-residue polypeptide: DNA-binding protein Fis (99 aa).

Residues 75–94 constitute a DNA-binding region (H-T-H motif); sequence QTRAASIMGINRSTLRKKLK.

Belongs to the transcriptional regulatory Fis family. In terms of assembly, homodimer.

Functionally, activates ribosomal RNA transcription. Plays a direct role in upstream activation of rRNA promoters. The polypeptide is DNA-binding protein Fis (Buchnera aphidicola subsp. Schizaphis graminum (strain Sg)).